Consider the following 299-residue polypeptide: Coenzyme PQQ synthesis protein B (299 aa).

The protein belongs to the PqqB family.

The protein operates within cofactor biosynthesis; pyrroloquinoline quinone biosynthesis. Its function is as follows. May be involved in the transport of PQQ or its precursor to the periplasm. The chain is Coenzyme PQQ synthesis protein B from Xanthomonas euvesicatoria pv. vesicatoria (strain 85-10) (Xanthomonas campestris pv. vesicatoria).